We begin with the raw amino-acid sequence, 593 residues long: Melanopsin-A (593 aa).

The Extracellular portion of the chain corresponds to 1–77; sequence MMSGAAHSVR…VDVPDHAHYT (77 aa). A helical transmembrane segment spans residues 78 to 98; the sequence is IGAVILTVGITGMLGNFLVIY. Residues 99-112 lie on the Cytoplasmic side of the membrane; sequence AFSRSRTLRTPANL. Residues 113 to 133 traverse the membrane as a helical segment; sequence FIINLAITDFLMCATQAPIFF. Topologically, residues 134 to 150 are extracellular; sequence TTSMHKRWIFGEKGCEL. Cysteine 148 and cysteine 226 form a disulfide bridge. Residues 151 to 171 traverse the membrane as a helical segment; the sequence is YAFCGALFGICSMITLMVIAV. The Cytoplasmic portion of the chain corresponds to 172–191; that stretch reads DRYFVITRPLASIGVLSQKR. Residues 192-212 form a helical membrane-spanning segment; the sequence is ALLILLVAWVYSLGWSLPPFF. The Extracellular segment spans residues 213–243; the sequence is GWSAYVPEGLLTSCTWDYMTFTPSVRAYTML. The chain crosses the membrane as a helical span at residues 244–264; it reads LFIFVFFIPLIVIIYCYFFIF. The Cytoplasmic segment spans residues 265 to 300; that stretch reads RSIRTTNEAVGKINGDNKRDSMKRFQRLKNEWKMAK. The helical transmembrane segment at 301-321 threads the bilayer; the sequence is IALIVILMYVISWSPYSTVAL. Over 322–336 the chain is Extracellular; that stretch reads TAFAGYSDFLTPYMN. A helical transmembrane segment spans residues 337 to 357; sequence SVPAVIAKASAIHNPIIYAIT. Lysine 344 bears the N6-(retinylidene)lysine mark. Over 358–593 the chain is Cytoplasmic; that stretch reads HPKYRLAIAK…HIDNHRPQYL (236 aa). Disordered stretches follow at residues 397–449 and 547–593; these read TVTS…RQVS and RSNV…PQYL. Positions 414–449 are enriched in polar residues; that stretch reads TGKSRLSSASDSESGWTDTEADLSSMSSRPASRQVS. Residues 581–593 are compositionally biased toward basic and acidic residues; the sequence is ESGHIDNHRPQYL.

This sequence belongs to the G-protein coupled receptor 1 family. Opsin subfamily.

Its subcellular location is the cell membrane. Its function is as follows. Photoreceptor implicated in non-image-forming responses to light. May be able to isomerize covalently bound all-trans retinal back to 11-cis retinal. The sequence is that of Melanopsin-A (opn4a) from Danio rerio (Zebrafish).